The primary structure comprises 333 residues: 4-hydroxyproline 2-epimerase (333 aa).

The active-site Proton acceptor is C90. Substrate-binding positions include 91 to 92, H223, and D249; that span reads GH. C253 (proton donor) is an active-site residue. Substrate is bound at residue 254–255; that stretch reads GT.

This sequence belongs to the proline racemase family.

It carries out the reaction trans-4-hydroxy-L-proline = cis-4-hydroxy-D-proline. In terms of biological role, catalyzes the epimerization of trans-4-hydroxy-L-proline (t4LHyp) to cis-4-hydroxy-D-proline (c4DHyp). May be involved in a degradation pathway of t4LHyp, which would allow S.novella to grow on t4LHyp as a sole carbon source. This chain is 4-hydroxyproline 2-epimerase, found in Ancylobacter novellus (strain ATCC 8093 / DSM 506 / JCM 20403 / CCM 1077 / IAM 12100 / NBRC 12443 / NCIMB 10456) (Starkeya novella).